The chain runs to 462 residues: Gamma-aminobutyric acid receptor subunit alpha-5 (462 aa).

The N-terminal stretch at 1 to 31 (MDNGMFSGFIMIKNLLLFCISMNLSSHFGFS) is a signal peptide. At 32-260 (QMPTSSVKDE…FHLKRKIGYF (229 aa)) the chain is on the extracellular side. N45 carries N-linked (GlcNAc...) asparagine glycosylation. 4-aminobutanoate is bound at residue R101. The N-linked (GlcNAc...) asparagine glycan is linked to N145. T164 contributes to the 4-aminobutanoate binding site. A disulfide bridge links C173 with C187. N207 and N236 each carry an N-linked (GlcNAc...) asparagine glycan. A helical transmembrane segment spans residues 261 to 281 (VIQTYLPCIMTVILSQVSFWL). The Cytoplasmic portion of the chain corresponds to 282–286 (NRESV). Residues 287–308 (PARTVFGVTTVLTMTTLSISAR) traverse the membrane as a helical segment. At 309–318 (NSLPKVAYAT) the chain is on the extracellular side. Residues 319–340 (AMDWFIAVCYAFVFSALIEFAT) traverse the membrane as a helical segment. Topologically, residues 341–427 (VNYFTKRGWA…TYNSISKIDK (87 aa)) are cytoplasmic. K355 participates in a covalent cross-link: Glycyl lysine isopeptide (Lys-Gly) (interchain with G-Cter in ubiquitin). The disordered stretch occupies residues 377 to 412 (FTTGKMSHPPNIPKEQTPAGTSNTTSVSVKPSEEKT). A helical transmembrane segment spans residues 428–448 (MSRIVFPVLFGTFNLVYWATY). Topologically, residues 449–462 (LNREPVIKGAASPK) are extracellular.

Belongs to the ligand-gated ion channel (TC 1.A.9) family. Gamma-aminobutyric acid receptor (TC 1.A.9.5) subfamily. GABRA5 sub-subfamily. In terms of assembly, heteropentamer, formed by a combination of alpha (GABRA1-6), beta (GABRB1-3), gamma (GABRG1-3), delta (GABRD), epsilon (GABRE), rho (GABRR1-3), pi (GABRP) and theta (GABRQ) chains, each subunit exhibiting distinct physiological and pharmacological properties.

The protein resides in the postsynaptic cell membrane. It localises to the cell membrane. The catalysed reaction is chloride(in) = chloride(out). Functionally, alpha subunit of the heteropentameric ligand-gated chloride channel gated by gamma-aminobutyric acid (GABA), a major inhibitory neurotransmitter in the brain. GABA-gated chloride channels, also named GABA(A) receptors (GABAAR), consist of five subunits arranged around a central pore and contain GABA active binding site(s) located at the alpha and beta subunit interface(s). When activated by GABA, GABAARs selectively allow the flow of chloride anions across the cell membrane down their electrochemical gradient. GABAARs containing alpha-5/GABRA5 subunits are mainly extrasynaptic and contribute to the tonic GABAergic inhibition in the hippocampus. Extrasynaptic alpha-5-containing GABAARs in CA1 pyramidal neurons play a role in learning and memory processes. This is Gamma-aminobutyric acid receptor subunit alpha-5 from Homo sapiens (Human).